The following is a 1479-amino-acid chain: Chromosome partition protein MukB (1479 aa).

34 to 41 (GGNGAGKS) contacts ATP. 2 coiled-coil regions span residues 138–163 (ETLN…MEGV) and 331–664 (QAAS…RLSQ). The tract at residues 665–782 (PGGSEDPRLN…ALPLFGRAAR (118 aa)) is flexible hinge. Coiled-coil stretches lie at residues 831–1112 (DDPE…TAKA) and 1206–1257 (VEAI…MLNQ).

Belongs to the SMC family. MukB subfamily. Homodimerization via its hinge domain. Binds to DNA via its C-terminal region. Interacts, and probably forms a ternary complex, with MukE and MukF via its C-terminal region. The complex formation is stimulated by calcium or magnesium. Interacts with tubulin-related protein FtsZ.

The protein localises to the cytoplasm. It is found in the nucleoid. Functionally, plays a central role in chromosome condensation, segregation and cell cycle progression. Functions as a homodimer, which is essential for chromosome partition. Involved in negative DNA supercoiling in vivo, and by this means organize and compact chromosomes. May achieve or facilitate chromosome segregation by condensation DNA from both sides of a centrally located replisome during cell division. The protein is Chromosome partition protein MukB of Klebsiella pneumoniae.